The sequence spans 67 residues: Large ribosomal subunit protein bL32 (67 aa).

Residues 1-19 (MAVPKRKMSRANTRARRSQ) are compositionally biased toward basic residues. Residues 1 to 21 (MAVPKRKMSRANTRARRSQWK) form a disordered region.

This sequence belongs to the bacterial ribosomal protein bL32 family.

The sequence is that of Large ribosomal subunit protein bL32 from Micrococcus luteus (strain ATCC 4698 / DSM 20030 / JCM 1464 / CCM 169 / CCUG 5858 / IAM 1056 / NBRC 3333 / NCIMB 9278 / NCTC 2665 / VKM Ac-2230) (Micrococcus lysodeikticus).